Consider the following 763-residue polypeptide: Xaa-Pro dipeptidyl-peptidase (763 aa).

Catalysis depends on charge relay system residues S349, D469, and H499.

Belongs to the peptidase S15 family. As to quaternary structure, homodimer.

The protein resides in the cytoplasm. The enzyme catalyses Hydrolyzes Xaa-Pro-|- bonds to release unblocked, N-terminal dipeptides from substrates including Ala-Pro-|-p-nitroanilide and (sequentially) Tyr-Pro-|-Phe-Pro-|-Gly-Pro-|-Ile.. In terms of biological role, removes N-terminal dipeptides sequentially from polypeptides having unsubstituted N-termini provided that the penultimate residue is proline. The sequence is that of Xaa-Pro dipeptidyl-peptidase from Streptococcus macedonicus (Streptococcus gallolyticus macedonicus).